A 293-amino-acid chain; its full sequence is 33 kDa chaperonin (293 aa).

Disulfide bonds link C237/C239 and C271/C274.

It belongs to the HSP33 family. In terms of processing, under oxidizing conditions two disulfide bonds are formed involving the reactive cysteines. Under reducing conditions zinc is bound to the reactive cysteines and the protein is inactive.

It localises to the cytoplasm. In terms of biological role, redox regulated molecular chaperone. Protects both thermally unfolding and oxidatively damaged proteins from irreversible aggregation. Plays an important role in the bacterial defense system toward oxidative stress. The polypeptide is 33 kDa chaperonin (Haemophilus influenzae (strain 86-028NP)).